The following is a 311-amino-acid chain: LOB domain-containing protein 10 (311 aa).

An LOB domain is found at 4–105 (TPCAACKLLR…QDLLTAKEEL (102 aa)). Positions 264–277 (LQEGQEQTEEGQFL) are enriched in low complexity. The disordered stretch occupies residues 264–311 (LQEGQEQTEEGQFLMQPMGQENLHDEEEEEELEPPVKWRMSENKEASF). Residues 287 to 296 (HDEEEEEELE) are compositionally biased toward acidic residues. Over residues 297–311 (PPVKWRMSENKEASF) the composition is skewed to basic and acidic residues.

This sequence belongs to the LOB domain-containing protein family.

The protein is LOB domain-containing protein 10 (LBD10) of Arabidopsis thaliana (Mouse-ear cress).